A 275-amino-acid chain; its full sequence is NH(3)-dependent NAD(+) synthetase (275 aa).

Glycine 46 to serine 53 contacts ATP. Aspartate 52 contacts Mg(2+). Arginine 140 provides a ligand contact to deamido-NAD(+). ATP is bound at residue threonine 160. Glutamate 165 lines the Mg(2+) pocket. Deamido-NAD(+) contacts are provided by lysine 173 and aspartate 180. ATP contacts are provided by lysine 189 and threonine 211. Histidine 260 to lysine 261 contributes to the deamido-NAD(+) binding site.

It belongs to the NAD synthetase family. As to quaternary structure, homodimer.

It catalyses the reaction deamido-NAD(+) + NH4(+) + ATP = AMP + diphosphate + NAD(+) + H(+). It functions in the pathway cofactor biosynthesis; NAD(+) biosynthesis; NAD(+) from deamido-NAD(+) (ammonia route): step 1/1. Catalyzes the ATP-dependent amidation of deamido-NAD to form NAD. Uses ammonia as a nitrogen source. The polypeptide is NH(3)-dependent NAD(+) synthetase (Shigella dysenteriae serotype 1 (strain Sd197)).